The primary structure comprises 428 residues: Neuromedin-U receptor 1 (428 aa).

Topologically, residues 1-59 are extracellular; it reads MTPPCLNCSIFPGALSPNASRSPLVCNISEFKWPYQPEDLNLTDEALRLKYLGPQQMKQ. N-linked (GlcNAc...) asparagine glycosylation is found at Asn27 and Asn41. A helical membrane pass occupies residues 60-80; that stretch reads FVPICVTYLLIFVVGTLGNGL. At 81–96 the chain is on the cytoplasmic side; the sequence is TCTVILRNKTMRTPTN. A helical transmembrane segment spans residues 97 to 117; the sequence is FYLFSLAVSDMLVLLVGLPLE. The Extracellular segment spans residues 118-137; the sequence is LYEMQQNYPFQLGASACYFR. The cysteines at positions 134 and 219 are disulfide-linked. Residues 138–158 form a helical membrane-spanning segment; sequence ILLLETVCLASVLNVTALSVE. Over 159–181 the chain is Cytoplasmic; sequence RYVAVVRPLQAKSVMTRAHVRRM. Residues 182–202 traverse the membrane as a helical segment; that stretch reads VGAIWVLATLFSLPNTSLHGL. At 203–235 the chain is on the extracellular side; the sequence is SQLTVPCRGPVPDSAICSLVGPMDFYKLVVLTT. The chain crosses the membrane as a helical span at residues 236 to 256; the sequence is ALLFFCLPMVTISVLYLLIGL. Over 257–294 the chain is Cytoplasmic; the sequence is RLRRERMLLQVEVKGRKTAATQETSHRRIQLQDRGRRQ. The helical transmembrane segment at 295–315 threads the bilayer; that stretch reads VTKMLFALVVVFGICWAPFHA. Residues 316 to 339 are Extracellular-facing; the sequence is DRIMWSLVYGHSTEGLHLAYQCVH. Residues 340 to 360 form a helical membrane-spanning segment; that stretch reads IASGIFFYLGSAANPVLYSLM. Over 361–428 the chain is Cytoplasmic; the sequence is STRFRETFLQ…PGCQQETDPS (68 aa).

The protein belongs to the G-protein coupled receptor 1 family. As to expression, ubiquitously expressed.

The protein localises to the cell membrane. Functionally, receptor for the neuromedin-U and neuromedin-S neuropeptides. The protein is Neuromedin-U receptor 1 (Nmur1) of Mus musculus (Mouse).